Consider the following 593-residue polypeptide: MAIDPQPSSPSLSSETIANDTIGNDNNVNEPSVEPKTQENQHTVPPRLSRIYSQAHHISQSFIDQNYPGEGTTQAPYRINFLPDDTQNAQLLPRWKKWAFVLLQSLACLATTFASSAYSGGIKQVIRAFGISQEVATLGISLYVLGFTFGPLIWAPLSELYGRKKVFFFTFMVATAFSAGAAGAGSIASLLVLRFLTGSIGSAPLSNAPALIADMFDKSERGLAMCMFSGAPFLGPAIGPIAGGFLGEAAGWRWLHGLMAAFTGVTWIACTVFIPETYAPYILRKRAQHMSKLTGKVYISTLDADKPPSSAAHQLKNALTRPWLLLFKEPIVFITSIYISIIYGTMYMCFAAFPIVFQKGRGWSQGIGGLAFTGIVIGVVLSIISFAFEDKRYARAAQRRGAPMEPEDRLPPAIMGSLLIPIGLFWFAWTTFPSVHWIVPIIGTVFFAWGLVLVFMALLNYLIDSYVIFAASIMAANSALRSLFGAAFPLFTRQMYDGLGVQWASSIPAFLALACVPFPFLFYKYGRQIRMKCEYAAEAANVLQKMRSLHVTVTEDDAMNEAEEMWRARTHNSHASAAHSHGHRRSLSYTRSV.

Residues 1-44 (MAIDPQPSSPSLSSETIANDTIGNDNNVNEPSVEPKTQENQHTV) form a disordered region. Polar residues predominate over residues 9–30 (SPSLSSETIANDTIGNDNNVNE). The N-linked (GlcNAc...) asparagine glycan is linked to N19. Transmembrane regions (helical) follow at residues 98–118 (WAFV…SSAY), 135–155 (VATL…LIWA), 167–187 (FFFT…AGSI), 195–215 (FLTG…IADM), 227–247 (MFSG…GFLG), 254–274 (WLHG…TVFI), 337–357 (IYIS…PIVF), 367–387 (IGGL…ISFA), 410–430 (LPPA…FAWT), 438–458 (IVPI…FMAL), 468–488 (IFAA…GAAF), and 503–523 (WASS…FLFY). Residues 570–593 (THNSHASAAHSHGHRRSLSYTRSV) are disordered.

This sequence belongs to the major facilitator superfamily. DHA1 family. Polyamines/proton antiporter (TC 2.A.1.2.16) subfamily.

Its subcellular location is the cell membrane. Its function is as follows. Efflux pump involved in export of fusaric acid, a mycotoxin with low to moderate toxicity to animals and humans, but with high phytotoxic properties. Constitutes a self-protecting mechanism of the fungus against critical levels of FSA within the cell. This chain is Efflux pump FUBT, found in Fusarium oxysporum (Fusarium vascular wilt).